We begin with the raw amino-acid sequence, 265 residues long: Cyclin-B2-5 (265 aa).

Belongs to the cyclin family. Cyclin AB subfamily.

In Arabidopsis thaliana (Mouse-ear cress), this protein is Cyclin-B2-5 (CYCB2-5).